The following is a 273-amino-acid chain: Serine acetyltransferase (273 aa).

Belongs to the transferase hexapeptide repeat family. In terms of assembly, part of the cysteine synthase complex formed at a ratio of 1 copy of this protein and 2 copies of O-acetylserine sulfhydrylase (cysK). The complex reversibly dissociates in the presence of O-acetyl-L-serine in the absence of hydrogen sulfide.

It is found in the cytoplasm. The enzyme catalyses L-serine + acetyl-CoA = O-acetyl-L-serine + CoA. It participates in amino-acid biosynthesis; L-cysteine biosynthesis; L-cysteine from L-serine: step 1/2. With respect to regulation, sensitive to feedback inhibition by L-cysteine. In Salmonella typhimurium (strain LT2 / SGSC1412 / ATCC 700720), this protein is Serine acetyltransferase (cysE).